Consider the following 330-residue polypeptide: Lactamase-like protein nscB (330 aa).

Residues H97, H99, D101, and H102 each coordinate Zn(2+). D101 acts as the Proton donor/acceptor in catalysis.

The protein belongs to the metallo-beta-lactamase superfamily. Requires Zn(2+) as cofactor.

Its pathway is secondary metabolite biosynthesis. Lactamase-like protein; part of the gene cluster that mediates the biosynthesis of neosartoricin, a prenylated anthracenone that exhibits T-cell antiproliferative activity, suggestive of a physiological role as an immunosuppressive agent. The non-reducing polyketide synthase nscA probably synthesizes and cyclizes the decaketide backbone. The hydrolase nscB then mediates the product release through hydrolysis followed by spontaneous decarboxylation. The prenyltransferase nscD catalyzes the addition of the dimethylallyl group to the aromatic C5. The FAD-dependent monooxygenase nscC is then responsible for the stereospecific hydroxylation at C2. There is no gene encoding O-acetyltransferase in the nsc gene cluster; thus, the last step of 2-O-acetylation leading to neosartoricin may be catalyzed by an unidentified O-acetyltransferase. This Aspergillus fumigatus (strain ATCC MYA-4609 / CBS 101355 / FGSC A1100 / Af293) (Neosartorya fumigata) protein is Lactamase-like protein nscB.